Consider the following 480-residue polypeptide: Iroquois-class homeodomain protein IRX-1 (480 aa).

Positions 127 to 189 form a DNA-binding region, homeobox; TALE-type; that stretch reads DPGRPKNATR…NARRRLKKEN (63 aa). Disordered regions lie at residues 190–285, 318–354, and 401–480; these read KVTW…LGLV, SLAE…PLQH, and PHGP…LPSA. Residues 210 to 232 show a composition bias toward acidic residues; the sequence is TEGDPEKAEDDEEIDLESIDIDQ. Residue serine 241 is modified to Phosphoserine. Residues 254–263 show a composition bias toward low complexity; it reads ARVAPPASAR. Polar residues predominate over residues 264–280; sequence DQSSPLSAAETLKSQDS. Positions 339–351 are enriched in low complexity; it reads SHASAHGPPSGSP.

This sequence belongs to the TALE/IRO homeobox family. In terms of tissue distribution, expressed in specific and overlapping patterns with Irx1 and Irx2 in the developing and adult metanephric kidney. In the adult metanephros, renal expression is found in the loop of Henle in the S3 proximal tubule segment and in the thick ascending limb (TAL) of the distal tubule.

It localises to the nucleus. This Mus musculus (Mouse) protein is Iroquois-class homeodomain protein IRX-1 (Irx1).